A 533-amino-acid chain; its full sequence is DELLA protein GAI (533 aa).

Positions 1–12 (MKRDHHHHHHQD) are enriched in basic residues. The interval 1–24 (MKRDHHHHHHQDKKTMMMNEEDDG) is disordered. A DELLA motif motif is present at residues 28-32 (DELLA). An LEXLE motif motif is present at residues 50–54 (LEQLE). Residues 73–77 (VHYNP) carry the VHYNP motif motif. The GRAS domain maps to 160 to 529 (VDSQENGVRL…RPLIATSAWK (370 aa)). The leucine repeat I (LRI) stretch occupies residues 167 to 221 (VRLVHALLACAEAVQKENLTVAEALVKQIGFLAVSQIGAMRKVATYFAEALARRI). A LxCxE motif motif is present at residues 174–178 (LACAE). The tract at residues 240–305 (QMHFYETCPY…GGPPVFRLTG (66 aa)) is VHIID. The VHIID signature appears at 271–275 (VHVID). A leucine repeat II (LRII) region spans residues 319-351 (EVGCKLAHLAEAIHVEFEYRGFVANTLADLDAS). Residues 363 to 450 (VAVNSVFELH…EVYLGKQICN (88 aa)) are PFYRE. The LXXLL motif signature appears at 371-375 (LHKLL). The SAW stretch occupies residues 453–529 (ACDGPDRVER…RPLIATSAWK (77 aa)).

Belongs to the GRAS family. DELLA subfamily. Interacts directly with the GID2/SLY1 component of the SCF(GID2) complex. Interacts (via N-terminus) with GID1A, GID1B and GID1B (via N-terminus). Interacts with the BOI proteins BOI, BRG1, BRG2, BRG3 and NUP58. Interacts with TOPP4. Interacts with TCP14 and TCP15. Interacts with FLZ5. Binds to and coactivates GAF1/IDD2 and ENY/IDD1 at the promoter of GA20OX2 gene. Binds to PDF2 and ATML1. Interacts with the prefoldin alpha subunits PFD3 and PFD5 in the nucleus. In terms of processing, phosphorylated. Post-translationally, gibberellin (GA) induces dephosphorylation of GAI by TOPP4 and subsequent degradation by the proteasomal pathway. May be ubiquitinated, as suggested by its interaction with GID2. Ubiquitination is however unsure since in contrast to other DELLA proteins, it is not ubiquitinated and degraded upon GA application. Nevertheless, ubiquitination may be triggered by other processes. In terms of tissue distribution, ubiquitously expressed. Expressed in rosette leaves, roots, stems and inflorescences of greenhouse grown.

Its subcellular location is the nucleus. Its activity is regulated as follows. Transcription activation is repressed by gibberellic acid GA(3) in the presence of TPR4. Its function is as follows. Transcriptional regulator that acts as a repressor of the gibberellin (GA) signaling pathway. Transcription coactivator of the zinc finger transcription factors GAF1/IDD2 and ENY/IDD1 in regulation of gibberellin homeostasis and signaling. No effect of the BOI proteins on its stability. Probably acts by participating in large multiprotein complexes that repress transcription of GA-inducible genes. Positively regulates XERICO expression. In contrast to RGA, it is less sensitive to GA. Its activity is probably regulated by other phytohormones such as auxin and ethylene. Involved in the regulation of seed dormancy and germination, including glucose-induced delay of seed germination. Involved in the process leading to microtubules (MTs) dissociation in response to gibberellic acid (GA) probably by mediating the translocation of the prefoldin co-chaperone complex from the cytoplasm to the nucleus. The chain is DELLA protein GAI from Arabidopsis thaliana (Mouse-ear cress).